Here is a 701-residue protein sequence, read N- to C-terminus: Translation initiation factor IF-2 (701 aa).

Over residues 48–62 (KIYKPEKAEQSEKSQ) the composition is skewed to basic and acidic residues. Positions 48–123 (KIYKPEKAEQ…EPKEMPSKIT (76 aa)) are disordered. Low complexity-rich tracts occupy residues 63–89 (QKNTQNKQQTTHNKGNQSNKGNQNNKP) and 97–109 (NNKNNKNNKNNKQ). Residues 110–119 (PKQEEPKEMP) show a composition bias toward basic and acidic residues. The tr-type G domain occupies 203–372 (ERPAVVTIMG…VLTSEVQELK (170 aa)). Residues 212 to 219 (GHVDHGKT) are G1. 212 to 219 (GHVDHGKT) serves as a coordination point for GTP. The segment at 237 to 241 (GITQH) is G2. Residues 258-261 (DTPG) are G3. GTP is bound by residues 258 to 262 (DTPGH) and 312 to 315 (NKID). Positions 312 to 315 (NKID) are G4. A G5 region spans residues 348 to 350 (SAL).

Belongs to the TRAFAC class translation factor GTPase superfamily. Classic translation factor GTPase family. IF-2 subfamily.

Its subcellular location is the cytoplasm. One of the essential components for the initiation of protein synthesis. Protects formylmethionyl-tRNA from spontaneous hydrolysis and promotes its binding to the 30S ribosomal subunits. Also involved in the hydrolysis of GTP during the formation of the 70S ribosomal complex. The sequence is that of Translation initiation factor IF-2 from Staphylococcus saprophyticus subsp. saprophyticus (strain ATCC 15305 / DSM 20229 / NCIMB 8711 / NCTC 7292 / S-41).